We begin with the raw amino-acid sequence, 163 residues long: Acetolactate synthase isozyme 3 small subunit (163 aa).

The ACT domain occupies 4-78 (ILSVLLENES…DVLRVSELGQ (75 aa)).

The protein belongs to the acetolactate synthase small subunit family. In terms of assembly, dimer of large and small chains.

It catalyses the reaction 2 pyruvate + H(+) = (2S)-2-acetolactate + CO2. It participates in amino-acid biosynthesis; L-isoleucine biosynthesis; L-isoleucine from 2-oxobutanoate: step 1/4. It functions in the pathway amino-acid biosynthesis; L-valine biosynthesis; L-valine from pyruvate: step 1/4. Its activity is regulated as follows. Sensitive to valine inhibition. The chain is Acetolactate synthase isozyme 3 small subunit (ilvH) from Salmonella typhimurium (strain LT2 / SGSC1412 / ATCC 700720).